Reading from the N-terminus, the 182-residue chain is Capsid protein (182 aa).

Residues 1–25 (MSSAAQPMSRRARRRAARRALGSQP) are disordered.

It localises to the virion. Functionally, capsid protein self-assembles to form a quasi-spherical capsid, about 26 nm, or bacilliform. The polypeptide is Capsid protein (Olive latent virus 2 (isolate Italy) (OLV-2)).